The sequence spans 36 residues: Mu/kappa-theraphotoxin-Ap1a (36 aa).

Disulfide bonds link Cys3–Cys18, Cys10–Cys23, and Cys17–Cys30. Position 36 is a phenylalanine amide (Phe36).

This sequence belongs to the neurotoxin 10 (Hwtx-1) family. In terms of tissue distribution, expressed by the venom gland.

The protein resides in the secreted. Inhibitor of voltage-gated potassium and sodium channels. Among other potassium channels, it selectively inhibits Kv10.1/KCNH1/EAG1 (IC(50)=236 nM) by shifting the voltage dependence of channel activation in a depolarising direction, it shows a maximum inhibition of 80% at saturating concentrations, it shows fast on-rates, and is poorly reversible. It also slightly affects channel inactivation, when the membrane is highly depolarised (&gt;+80 mV). It shows similar potency on Nav1.7/SCN9A (IC(50)=222 nM) and lower potency on Nav1.2/SCN2A (IC(50)=519 nM). The polypeptide is Mu/kappa-theraphotoxin-Ap1a (Avicularia purpurea (Ecuadorian purple pinktoe tarantula)).